The primary structure comprises 604 residues: Serine/threonine-protein kinase A-Raf (604 aa).

One can recognise an RBD domain in the interval Gly-19 to Leu-91. Residues Met-98 to Cys-144 form a Phorbol-ester/DAG-type zinc finger. Zn(2+) contacts are provided by His-99, Cys-112, Cys-115, Cys-125, Cys-128, His-133, Cys-136, and Cys-144. A phosphoserine mark is found at Ser-157 and Ser-162. 2 disordered regions span residues Glu-178–Ser-222 and Thr-241–Lys-287. Thr-181 is modified (phosphothreonine). A Phosphoserine modification is found at Ser-186. Over residues Ile-210–Ser-222 the composition is skewed to polar residues. Positions Pro-252 to Arg-265 are enriched in low complexity. A phosphoserine mark is found at Ser-255 and Ser-267. The segment covering Leu-272 to Lys-287 has biased composition (basic and acidic residues). The region spanning Val-308–Leu-568 is the Protein kinase domain. Residues Ile-314–Val-322 and Lys-334 contribute to the ATP site. Phosphothreonine is present on Thr-316. Asp-427 (proton acceptor) is an active-site residue.

The protein belongs to the protein kinase superfamily. TKL Ser/Thr protein kinase family. RAF subfamily. In terms of assembly, interacts with TH1L/NELFD. The cofactor is Zn(2+). Post-translationally, dephosphorylation by the SHOC2-MRAS-PP1c (SMP) complex consisting of SHOC2, GTP-bound M-Ras/MRAS and the catalytic subunit of protein phosphatase 1 (PPP1CA, PPP1CB or PPP1CC); this relieves inactivation and stimulates kinase activity.

It catalyses the reaction L-seryl-[protein] + ATP = O-phospho-L-seryl-[protein] + ADP + H(+). The enzyme catalyses L-threonyl-[protein] + ATP = O-phospho-L-threonyl-[protein] + ADP + H(+). Functionally, involved in the transduction of mitogenic signals from the cell membrane to the nucleus. May also regulate the TOR signaling cascade. Phosphorylates PFKFB2. The chain is Serine/threonine-protein kinase A-Raf (Araf) from Rattus norvegicus (Rat).